Consider the following 69-residue polypeptide: MDWNRVEGNWKQVKGKVKEQWGKLTDDDLDQISGSREQLEGKIQERYGIEKDRVRRDIDDWYGRQTWNW.

Belongs to the UPF0337 (CsbD) family.

This is UPF0337 protein RB0906 from Rhizobium meliloti (strain 1021) (Ensifer meliloti).